Here is a 469-residue protein sequence, read N- to C-terminus: SVGFKAGVKEYKLTYYTPEYETKETDILAAFRVTPQPGVPPEERGAAVAAESSTGTWTTVWTDGLTSLDRYKGRCYHIEPVPGEEDQYIAYVAYPLDLFEEGSVTNMFTSIVGNVFGFKALRAXRLEDLRIPVAYTKTFQGPPHGIQVERDKLNKYGRPLLGCTIKPKLGLSAKNYGRAVYECLRGGLDFTKDDENVNSQPFMRWRDRFLFCAEAIYKAQAETGEIKGHYLNATAGTCEEMIKRAVFARELGAPIVMHDYLTGGFTANTSXAHYCRDNGLLLHIHRAMHAVIDRQKNHGMHFRVLAKALRLSGGDHIHAGTVVGKLEGERDITLGFVDLLRDDFIEKDRSRGIYFTQDWVSLPGVLPVASGGIHVWHMPALTEIFGDDSVLQFGGGTLGHPWGNAPGAVANRVALEAXVKARNEGRDLAAEGNEIIREASKWSPELAAACEVWKEIRFNFKAVDTLDPS.

Lys5 is modified (N6,N6,N6-trimethyllysine). The substrate site is built by Asn114 and Thr164. The active-site Proton acceptor is the Lys166. Lys168 contributes to the substrate binding site. 3 residues coordinate Mg(2+): Lys192, Asp194, and Glu195. Lys192 bears the N6-carboxylysine mark. The active-site Proton acceptor is the His285. Residues Arg286, His318, and Ser370 each contribute to the substrate site.

The protein belongs to the RuBisCO large chain family. Type I subfamily. Heterohexadecamer of 8 large chains and 8 small chains; disulfide-linked. The disulfide link is formed within the large subunit homodimers. Mg(2+) serves as cofactor. The disulfide bond which can form in the large chain dimeric partners within the hexadecamer appears to be associated with oxidative stress and protein turnover.

Its subcellular location is the plastid. It localises to the chloroplast. The catalysed reaction is 2 (2R)-3-phosphoglycerate + 2 H(+) = D-ribulose 1,5-bisphosphate + CO2 + H2O. It carries out the reaction D-ribulose 1,5-bisphosphate + O2 = 2-phosphoglycolate + (2R)-3-phosphoglycerate + 2 H(+). In terms of biological role, ruBisCO catalyzes two reactions: the carboxylation of D-ribulose 1,5-bisphosphate, the primary event in carbon dioxide fixation, as well as the oxidative fragmentation of the pentose substrate in the photorespiration process. Both reactions occur simultaneously and in competition at the same active site. The polypeptide is Ribulose bisphosphate carboxylase large chain (Cephalanthus occidentalis (Common buttonbush)).